A 454-amino-acid polypeptide reads, in one-letter code: Chromosomal replication initiator protein DnaA (454 aa).

Positions 1–76 (MNKLKTDLNL…IGASFRILAK (76 aa)) are domain I, interacts with DnaA modulators. The tract at residues 76-113 (KNPKIIFAQESPGNGEKATGKKIKSLPREDKSSIFESK) is domain II. A domain III, AAA+ region region spans residues 114–330 (GLNTKFSFEN…GALNRLCAYA (217 aa)). Residues Gly158, Gly160, Lys161, and Thr162 each coordinate ATP. The interval 331–454 (SIHKEGKITL…KITEQLTSSQ (124 aa)) is domain IV, binds dsDNA.

The protein belongs to the DnaA family. As to quaternary structure, oligomerizes as a right-handed, spiral filament on DNA at oriC.

Its subcellular location is the cytoplasm. Functionally, plays an essential role in the initiation and regulation of chromosomal replication. ATP-DnaA binds to the origin of replication (oriC) to initiate formation of the DNA replication initiation complex once per cell cycle. Binds the DnaA box (a 9 base pair repeat at the origin) and separates the double-stranded (ds)DNA. Forms a right-handed helical filament on oriC DNA; dsDNA binds to the exterior of the filament while single-stranded (ss)DNA is stabiized in the filament's interior. The ATP-DnaA-oriC complex binds and stabilizes one strand of the AT-rich DNA unwinding element (DUE), permitting loading of DNA polymerase. After initiation quickly degrades to an ADP-DnaA complex that is not apt for DNA replication. Binds acidic phospholipids. This is Chromosomal replication initiator protein DnaA from Methylacidiphilum infernorum (isolate V4) (Methylokorus infernorum (strain V4)).